The primary structure comprises 150 residues: Arginine repressor (150 aa).

The protein belongs to the ArgR family.

It is found in the cytoplasm. It functions in the pathway amino-acid biosynthesis; L-arginine biosynthesis [regulation]. Regulates arginine biosynthesis genes. The polypeptide is Arginine repressor (Clostridium botulinum (strain Eklund 17B / Type B)).